Reading from the N-terminus, the 832-residue chain is DEAD-box ATP-dependent RNA helicase 13 (832 aa).

Over residues 1 to 12 the composition is skewed to pro residues; sequence MAAAPPPPPPPQ. 2 disordered regions span residues 1–59 and 91–173; these read MAAA…TMVE and VEDL…DDNV. A compositionally biased stretch (basic residues) spans 29 to 42; the sequence is RKGKKSRGAKKPRR. A compositionally biased stretch (low complexity) spans 43 to 55; that stretch reads AAAAAAASTSSAG. Basic residues predominate over residues 105–114; that stretch reads QKKKKRKKRK. Residues 128 to 137 show a composition bias toward acidic residues; it reads LVVECEEEGE. Positions 141–155 are enriched in basic residues; it reads KRVKKKRRSRKKRKV. Basic and acidic residues predominate over residues 156-167; sequence KEMEEKMESKED. Residues 198 to 226 carry the Q motif motif; that stretch reads YAWRELRLHPLLITAVRRLGFKEPTPIQK. One can recognise a Helicase ATP-binding domain in the interval 230 to 447; that stretch reads PAAAHQGKDV…KLKRGLVTAK (218 aa). 243–250 is a binding site for ATP; sequence AETGSGKT. The DEAD box signature appears at 371-374; sequence DEAD. Residues 484–645 form the Helicase C-terminal domain; it reads KLEESFIECS…QFPVDHAYMP (162 aa). The tract at residues 800-832 is disordered; sequence RRLAENWRRKKQKEKKSTREQKRKEKRIAKERD. Residues 814–832 show a composition bias toward basic and acidic residues; that stretch reads KKSTREQKRKEKRIAKERD.

It belongs to the DEAD box helicase family. DDX24/MAK5 subfamily.

The catalysed reaction is ATP + H2O = ADP + phosphate + H(+). The sequence is that of DEAD-box ATP-dependent RNA helicase 13 from Oryza sativa subsp. japonica (Rice).